The sequence spans 358 residues: Ganglioside-induced differentiation-associated protein 1 (358 aa).

One can recognise a GST N-terminal domain in the interval 24–105 (VHLILYHWTH…YLEQTFLDER (82 aa)). Residues lysine 50, lysine 172, lysine 173, lysine 188, and lysine 190 each participate in a glycyl lysine isopeptide (Lys-Gly) (interchain with G-Cter in ubiquitin) cross-link. Residues 153 to 309 (PAYATTRIRS…LISAVLPTAF (157 aa)) enclose the GST C-terminal domain. Lysine 203 is modified (N6-acetyllysine; alternate). A Glycyl lysine isopeptide (Lys-Gly) (interchain with G-Cter in ubiquitin); alternate cross-link involves residue lysine 203. Glycyl lysine isopeptide (Lys-Gly) (interchain with G-Cter in ubiquitin) cross-links involve residues lysine 206, lysine 207, and lysine 214. 2 helical membrane passes run 292–312 (VLGH…FRVA) and 320–340 (LGST…FMLF). The segment at 320 to 358 (LGSTLVVGLLVGMGYFAFMLFRRRLGSMILALRPRPNYF) is required for mitochondrial localization.

This sequence belongs to the GST superfamily. In terms of assembly, homodimer. Post-translationally, ubiquitinated by PRKN during mitophagy, leading to its degradation and enhancement of mitophagy. Deubiquitinated by USP30. In terms of tissue distribution, expressed in brain, spinal cord, muscles and intestinal villi. In the central nervous system expressed most prominently in the cortex, cerebellum, thalamus, olfactory bulb, and spinal cord. Expressed also in sciatic nerves and in dorsal root ganglia.

It is found in the mitochondrion outer membrane. It localises to the cytoplasm. Functionally, regulates the mitochondrial network by promoting mitochondrial fission. The chain is Ganglioside-induced differentiation-associated protein 1 (Gdap1) from Mus musculus (Mouse).